The primary structure comprises 226 residues: Transmembrane gamma-carboxyglutamic acid protein 4 (226 aa).

Positions 1–17 (MFPLLIVLSQLPRLTLA) are cleaved as a signal peptide. The propeptide occupies 18–49 (VPHCIRSLKDSEHAPEEVFASKEAANIFMHRR). Over 50–113 (LLNNRFDLEL…GSDVNKEKID (64 aa)) the chain is Extracellular. A Gla domain is found at 52 to 98 (NNRFDLELFTPGDLERECYEEFCSYEEAREILGDDENTIKFWQTYSI). A disulfide bond links cysteine 69 and cysteine 74. Position 72 is a 4-carboxyglutamate (glutamate 72). The chain crosses the membrane as a helical span at residues 114–134 (VMSLLTGLIVAGVFLVIFGLV). Over 135-226 (GYYVCLTKCK…FKKSMSLPSH (92 aa)) the chain is Cytoplasmic. The residue at position 164 (serine 164) is a Phosphoserine. Positions 186 to 189 (LPSY) match the LPXY motif; mediates binding to WW domain-containing proteins motif. Positions 204-207 (PPPY) match the PPXY motif; mediates binding to WW domain-containing proteins motif.

Belongs to the commissureless family. In terms of assembly, interacts (via cytoplasmic domain) with WW domain-containing proteins MAGI1, MAGI3, NEDD4, NEDD4L, WWTR1/TAZ and YAP1. Post-translationally, gamma-carboxyglutamate residues are formed by vitamin K dependent carboxylation. These residues are essential for the binding of calcium.

It is found in the endoplasmic reticulum-Golgi intermediate compartment membrane. Its subcellular location is the cell membrane. Its function is as follows. May control axon guidance across the CNS. Prevents the delivery of ROBO1 at the cell surface and down-regulates its expression. The polypeptide is Transmembrane gamma-carboxyglutamic acid protein 4 (Prrg4) (Mus musculus (Mouse)).